A 677-amino-acid chain; its full sequence is L-type lectin-domain containing receptor kinase IV.2 (677 aa).

The first 22 residues, 1–22, serve as a signal peptide directing secretion; it reads MFVKLKLIFFFFLLCQIMISSS. The Extracellular segment spans residues 23-291; that stretch reads QNLNFTYNGF…EPRRISEFYK (269 aa). The legume-lectin like stretch occupies residues 24–262; sequence NLNFTYNGFH…EHFLVGWSFR (239 aa). Residues asparagine 26, asparagine 57, asparagine 81, asparagine 128, asparagine 134, asparagine 171, asparagine 186, and asparagine 203 are each glycosylated (N-linked (GlcNAc...) asparagine). A helical transmembrane segment spans residues 292 to 312; sequence IGMPLISLSLIFSIIFLAFYI. Residues 313 to 677 lie on the Cytoplasmic side of the membrane; sequence VRRKKKYEEE…IADSLLSGGR (365 aa). One can recognise a Protein kinase domain in the interval 347-625; sequence FKEKDLLGSG…LQYLRGDMAL (279 aa). ATP-binding positions include 353 to 361 and lysine 376; that span reads LGSGGFGRV. Aspartate 472 serves as the catalytic Proton acceptor.

It in the C-terminal section; belongs to the protein kinase superfamily. Ser/Thr protein kinase family. This sequence in the N-terminal section; belongs to the leguminous lectin family.

The protein localises to the cell membrane. The catalysed reaction is L-seryl-[protein] + ATP = O-phospho-L-seryl-[protein] + ADP + H(+). The enzyme catalyses L-threonyl-[protein] + ATP = O-phospho-L-threonyl-[protein] + ADP + H(+). In terms of biological role, required during pollen development. Functionally, involved in resistance response to the pathogenic bacteria Pseudomonas syringae. The sequence is that of L-type lectin-domain containing receptor kinase IV.2 from Arabidopsis thaliana (Mouse-ear cress).